The following is a 230-amino-acid chain: Leucyl/phenylalanyl-tRNA--protein transferase (230 aa).

It belongs to the L/F-transferase family.

The protein localises to the cytoplasm. The catalysed reaction is N-terminal L-lysyl-[protein] + L-leucyl-tRNA(Leu) = N-terminal L-leucyl-L-lysyl-[protein] + tRNA(Leu) + H(+). It catalyses the reaction N-terminal L-arginyl-[protein] + L-leucyl-tRNA(Leu) = N-terminal L-leucyl-L-arginyl-[protein] + tRNA(Leu) + H(+). The enzyme catalyses L-phenylalanyl-tRNA(Phe) + an N-terminal L-alpha-aminoacyl-[protein] = an N-terminal L-phenylalanyl-L-alpha-aminoacyl-[protein] + tRNA(Phe). Its function is as follows. Functions in the N-end rule pathway of protein degradation where it conjugates Leu, Phe and, less efficiently, Met from aminoacyl-tRNAs to the N-termini of proteins containing an N-terminal arginine or lysine. In Rhodopseudomonas palustris (strain BisB18), this protein is Leucyl/phenylalanyl-tRNA--protein transferase.